The following is a 148-amino-acid chain: Cofilin/actin-depolymerizing factor homolog (148 aa).

The 140-residue stretch at 4–143 folds into the ADF-H domain; that stretch reads GVTVSDVCKT…SREAVEEKLR (140 aa). The short motif at 19 to 23 is the Nuclear localization signal element; it reads KKDKK.

Belongs to the actin-binding proteins ADF family. Phosphorylated in vitro by protein kinase LIMK1. Phosphorylation is required for inactivation of tsr and for cell proliferation and axon growth. Phosphorylation is negatively regulated by the panthothenate kinase fbl which catalyzes the first step in the conversion of panthothenic acid to coenzyme A. In terms of processing, dephosphorylated by protein phosphatase ssh which activates tsr.

It localises to the cytoplasm. The protein localises to the cytoskeleton. The protein resides in the nucleus matrix. Functionally, exhibits F-actin depolymerizing activity and regulates actin cytoskeleton dynamics. Required for cytokinesis in both mitotic and meiotic cells and for aster migration and separation. Promotes cell motility during ovary development and oogenesis. During larval development, required for the cell rearrangement needed for formation of terminal filaments which are stacks of somatic cells that are important for the initiation of ovarioles. Also required for border cell migration during oogenesis. During border cell migration, required for actin turnover and lamellipodial protrusion. Required for the establishment of planar cell polarity (PCP) where cells adopt a uniform orientation within the plane of an epithelium. During establishment of PCP, required for the redistribution of the PCP core proteins fz and stan/fmi to the proximodistal cell boundary. During pupal development, required for elongation of the retinal cell body and for rhabdomere morphogenesis. Required for mushroom body neuroblast proliferation and axon growth. Plays a role in the positive regulation of protein secretion. Plays a role in the regulation of nuclear localization of actin. Required for the maintenance of epithelial integrity by controlling cell junctions and is also necessary for cell survival and tissue growth through regulation of JNK and yki signaling. This Drosophila melanogaster (Fruit fly) protein is Cofilin/actin-depolymerizing factor homolog.